A 107-amino-acid chain; its full sequence is U1-lycotoxin-Ls1b (107 aa).

Positions 1 to 20 are cleaved as a signal peptide; sequence MMKVLVVVALLVTLISYSSS. Residues 21 to 41 constitute a propeptide that is removed on maturation; the sequence is EGIDDLEADELLSLMADEQTR. Intrachain disulfides connect cysteine 44–cysteine 59, cysteine 51–cysteine 68, cysteine 58–cysteine 86, and cysteine 70–cysteine 84.

This sequence belongs to the neurotoxin 19 (CSTX) family. 04 (U1-Lctx) subfamily. In terms of tissue distribution, expressed by the venom gland.

The protein localises to the secreted. This is U1-lycotoxin-Ls1b from Lycosa singoriensis (Wolf spider).